The primary structure comprises 1396 residues: DNA-directed RNA polymerase subunit beta' (1396 aa).

Zn(2+) is bound by residues C73, C75, C88, and C91. Mg(2+)-binding residues include D467, D469, and D471. Zn(2+) is bound by residues C817, C891, C898, and C901.

Belongs to the RNA polymerase beta' chain family. The RNAP catalytic core consists of 2 alpha, 1 beta, 1 beta' and 1 omega subunit. When a sigma factor is associated with the core the holoenzyme is formed, which can initiate transcription. It depends on Mg(2+) as a cofactor. The cofactor is Zn(2+).

It catalyses the reaction RNA(n) + a ribonucleoside 5'-triphosphate = RNA(n+1) + diphosphate. Functionally, DNA-dependent RNA polymerase catalyzes the transcription of DNA into RNA using the four ribonucleoside triphosphates as substrates. This Orientia tsutsugamushi (strain Boryong) (Rickettsia tsutsugamushi) protein is DNA-directed RNA polymerase subunit beta'.